The sequence spans 204 residues: Leucyl/phenylalanyl-tRNA--protein transferase (204 aa).

This sequence belongs to the L/F-transferase family.

Its subcellular location is the cytoplasm. It catalyses the reaction N-terminal L-lysyl-[protein] + L-leucyl-tRNA(Leu) = N-terminal L-leucyl-L-lysyl-[protein] + tRNA(Leu) + H(+). The enzyme catalyses N-terminal L-arginyl-[protein] + L-leucyl-tRNA(Leu) = N-terminal L-leucyl-L-arginyl-[protein] + tRNA(Leu) + H(+). It carries out the reaction L-phenylalanyl-tRNA(Phe) + an N-terminal L-alpha-aminoacyl-[protein] = an N-terminal L-phenylalanyl-L-alpha-aminoacyl-[protein] + tRNA(Phe). Its function is as follows. Functions in the N-end rule pathway of protein degradation where it conjugates Leu, Phe and, less efficiently, Met from aminoacyl-tRNAs to the N-termini of proteins containing an N-terminal arginine or lysine. This chain is Leucyl/phenylalanyl-tRNA--protein transferase, found in Rhizobium etli (strain ATCC 51251 / DSM 11541 / JCM 21823 / NBRC 15573 / CFN 42).